The chain runs to 631 residues: Chaperone protein DnaK (631 aa).

The residue at position 175 (Thr175) is a Phosphothreonine; by autocatalysis. The tract at residues 586–631 (GAEGAAAGAGAAGAAGAGASAGSASGSDDDTVEAEVVDDDDDKDNK) is disordered. Over residues 602–611 (AGASAGSASG) the composition is skewed to low complexity. The segment covering 612–631 (SDDDTVEAEVVDDDDDKDNK) has biased composition (acidic residues).

It belongs to the heat shock protein 70 family.

Functionally, acts as a chaperone. This chain is Chaperone protein DnaK, found in Bifidobacterium longum subsp. infantis (strain ATCC 15697 / DSM 20088 / JCM 1222 / NCTC 11817 / S12).